A 155-amino-acid polypeptide reads, in one-letter code: Probable Brix domain-containing ribosomal biogenesis protein (155 aa).

The Brix domain maps to Met-1–Glu-155.

Functionally, probably involved in the biogenesis of the ribosome. This is Probable Brix domain-containing ribosomal biogenesis protein from Methanococcoides burtonii (strain DSM 6242 / NBRC 107633 / OCM 468 / ACE-M).